We begin with the raw amino-acid sequence, 368 residues long: MHENFDKRLEVLLEGLALTRRSLDPEGKENELKELEQQAVQDGFWDDVARAGKISERIARLKQQLSEFNELKNKVSTIQFFLEDEESSKDLEMQKELEKEFVFCEKKITEWETLRLLSGELDRNSCFLSINAGAGGTESCDWVEMVLRMYMRWASSHSWRVEVIDRLDGEVAGIKHITLKLVGEYAYGYAKAESGVHRLVRISPFDSNAKRHTSFASVEVFPEIDDKIEVEIRPGDIRIDTYRSSGAGGQHVNVTDSAVRITHFPTGIVVSCQNERSQIQNREACMNMLRARIYQKLLQERLEKQNIDRKNKKEISWGSQIRNYVFQPYTLVKDVRTGYEVGNIQAMMDGELLDAFIKAYLVDYGEIT.

At Q250 the chain carries N5-methylglutamine.

Belongs to the prokaryotic/mitochondrial release factor family. Post-translationally, methylated by PrmC. Methylation increases the termination efficiency of RF2.

It is found in the cytoplasm. Peptide chain release factor 2 directs the termination of translation in response to the peptide chain termination codons UGA and UAA. The sequence is that of Peptide chain release factor 2 from Chlamydia trachomatis serovar L2b (strain UCH-1/proctitis).